A 136-amino-acid polypeptide reads, in one-letter code: DNA-directed RNA polymerase subunit omega (136 aa).

Residues E79–A107 are disordered. A compositionally biased stretch (low complexity) spans S89 to A107.

Belongs to the RNA polymerase subunit omega family. The RNAP catalytic core consists of 2 alpha, 1 beta, 1 beta' and 1 omega subunit. When a sigma factor is associated with the core the holoenzyme is formed, which can initiate transcription.

The catalysed reaction is RNA(n) + a ribonucleoside 5'-triphosphate = RNA(n+1) + diphosphate. Its function is as follows. Promotes RNA polymerase assembly. Latches the N- and C-terminal regions of the beta' subunit thereby facilitating its interaction with the beta and alpha subunits. The protein is DNA-directed RNA polymerase subunit omega of Methylobacterium radiotolerans (strain ATCC 27329 / DSM 1819 / JCM 2831 / NBRC 15690 / NCIMB 10815 / 0-1).